The primary structure comprises 465 residues: Endo-1,3-1,4-beta-glycanase ExsH (465 aa).

3 Hemolysin-type calcium-binding repeats span residues 33-50, 105-122, and 123-140; these read HGTAGNDSMWGDSSVNVT, FGNEADNIIKGGSGTQTI, and DGRGGNDVLIGAGGADTF. Residues 206–462 enclose the GH16 domain; it reads AHQFRLSLDR…YIKAYSLDAD (257 aa). Residue glutamate 349 is the Nucleophile of the active site. The active-site Proton donor is the glutamate 354.

The protein belongs to the glycosyl hydrolase 16 family.

The protein resides in the secreted. It participates in glycan metabolism; exopolysaccharide biosynthesis. Cleaves high molecular weight succinoglycan to yield LMW succinoglycan. Dynamically regulates the molecular weight distribution of succinoglycan by cleaving nascent succinoglycan only during a limited period after its synthesis, perhaps before it undergoes a time-dependent change in its conformation or aggregation state. The polypeptide is Endo-1,3-1,4-beta-glycanase ExsH (exsH) (Rhizobium meliloti (strain 1021) (Ensifer meliloti)).